The sequence spans 159 residues: 3-hydroxyacyl-[acyl-carrier-protein] dehydratase FabZ (159 aa).

Residue H58 is part of the active site.

This sequence belongs to the thioester dehydratase family. FabZ subfamily.

It localises to the cytoplasm. The catalysed reaction is a (3R)-hydroxyacyl-[ACP] = a (2E)-enoyl-[ACP] + H2O. In terms of biological role, involved in unsaturated fatty acids biosynthesis. Catalyzes the dehydration of short chain beta-hydroxyacyl-ACPs and long chain saturated and unsaturated beta-hydroxyacyl-ACPs. This Helicobacter pylori (strain J99 / ATCC 700824) (Campylobacter pylori J99) protein is 3-hydroxyacyl-[acyl-carrier-protein] dehydratase FabZ.